Here is a 199-residue protein sequence, read N- to C-terminus: Putative peroxiredoxin ycf42 (199 aa).

The Thioredoxin domain maps to 8–165 (LQVGQIAPDF…TLRVLQAIQY (158 aa)). C53 (cysteine sulfenic acid (-SOH) intermediate) is an active-site residue.

Belongs to the peroxiredoxin family. AhpC/Prx1 subfamily. In terms of assembly, homodimer; disulfide-linked, upon oxidation. Post-translationally, the Cys-53-SH group is the primary site of oxidation by H(2)O(2), and the oxidized Cys-53 (probably Cys-SOH) rapidly reacts with Cys-174-SH of the other subunit to form an intermolecular disulfide. This disulfide is subsequently reduced by thioredoxin.

The protein localises to the plastid. Its subcellular location is the chloroplast. The catalysed reaction is a hydroperoxide + [thioredoxin]-dithiol = an alcohol + [thioredoxin]-disulfide + H2O. In terms of biological role, thiol-specific peroxidase that catalyzes the reduction of hydrogen peroxide and organic hydroperoxides to water and alcohols, respectively. Plays a role in cell protection against oxidative stress by detoxifying peroxides. The protein is Putative peroxiredoxin ycf42 (ycf42) of Porphyra purpurea (Red seaweed).